Reading from the N-terminus, the 288-residue chain is Bifunctional protein FolD (288 aa).

NADP(+)-binding positions include 166 to 168 (GRS), S191, and I232.

The protein belongs to the tetrahydrofolate dehydrogenase/cyclohydrolase family. Homodimer.

The catalysed reaction is (6R)-5,10-methylene-5,6,7,8-tetrahydrofolate + NADP(+) = (6R)-5,10-methenyltetrahydrofolate + NADPH. The enzyme catalyses (6R)-5,10-methenyltetrahydrofolate + H2O = (6R)-10-formyltetrahydrofolate + H(+). It participates in one-carbon metabolism; tetrahydrofolate interconversion. Its function is as follows. Catalyzes the oxidation of 5,10-methylenetetrahydrofolate to 5,10-methenyltetrahydrofolate and then the hydrolysis of 5,10-methenyltetrahydrofolate to 10-formyltetrahydrofolate. In Rickettsia africae (strain ESF-5), this protein is Bifunctional protein FolD.